We begin with the raw amino-acid sequence, 273 residues long: Large ribosomal subunit protein uL2cz/uL2cy (273 aa).

Disordered stretches follow at residues 1 to 22 and 223 to 254; these read MAIHLYKTSTPSTRNGAVDSQV and MNPVDHPHGGGEGRAPIGRKKPTTPWGYPALG.

Belongs to the universal ribosomal protein uL2 family. In terms of assembly, part of the 50S ribosomal subunit.

The protein localises to the plastid. The protein resides in the chloroplast. The sequence is that of Large ribosomal subunit protein uL2cz/uL2cy (rpl2-A) from Drimys granadensis.